A 252-amino-acid polypeptide reads, in one-letter code: tRNA uridine(34) hydroxylase (252 aa).

The Rhodanese domain occupies 129–223; it reads QGRPVVMLDT…YFEETGGKGF (95 aa). Residue cysteine 183 is the Cysteine persulfide intermediate of the active site.

The protein belongs to the TrhO family.

The catalysed reaction is uridine(34) in tRNA + AH2 + O2 = 5-hydroxyuridine(34) in tRNA + A + H2O. In terms of biological role, catalyzes oxygen-dependent 5-hydroxyuridine (ho5U) modification at position 34 in tRNAs. This chain is tRNA uridine(34) hydroxylase, found in Bordetella petrii (strain ATCC BAA-461 / DSM 12804 / CCUG 43448).